The following is a 245-amino-acid chain: MHIDIIGDIHGCYREFTALTEKLGYVWDKGIPIHPDGRKLGFVGDLTDRGPESLKMIDIVCALVDRKLAHYVPGNHCNKLYRFFLGRNVQVTHGLETTVAEYRALPPSEQEMIRRKFIRLYEGAPLYAVLDEGRLVIAHAGIRHDYIGRMDKKVKTFVLYGDITGETNPDGTPVRRDWAKRYRGDAWIVYGHTPVEKPRFVGRTVNIDTGCVFGGALTALRYPEMTTVSVPSSMPHVPEKFRTFS.

It belongs to the PrpE family. The cofactor is Ni(2+).

The catalysed reaction is P(1),P(4)-bis(5'-guanosyl) tetraphosphate + H2O = GMP + GTP + 2 H(+). Asymmetrically hydrolyzes Ap4p to yield AMP and ATP. This chain is Bis(5'-nucleosyl)-tetraphosphatase PrpE [asymmetrical], found in Geobacillus thermodenitrificans (strain NG80-2).